Reading from the N-terminus, the 585-residue chain is YTH domain-containing family protein 3 (585 aa).

Disordered regions lie at residues methionine 1–methionine 52, arginine 243–glycine 277, and proline 304–glutamine 351. Serine 2 is subject to N-acetylserine. A compositionally biased stretch (polar residues) spans asparagine 15 to isoleucine 24. A Phosphoserine modification is found at serine 23. The segment covering lysine 244–proline 254 has biased composition (basic residues). A compositionally biased stretch (low complexity) spans glutamine 329–glutamine 351. The 135-residue stretch at glycine 416–isoleucine 550 folds into the YTH domain. Residues lysine 422–tyrosine 424, aspartate 428, tryptophan 438–cysteine 439, asparagine 468, tryptophan 492, and tryptophan 497 each bind RNA.

Belongs to the YTHDF family. YTHDF3 subfamily. Interacts with CNOT1; promoting recruitment of the CCR4-NOT complex. Interacts with YTHDF1. Interacts with YTHDF2. Interacts with PAN3. Post-translationally, (Microbial infection) Proteolytically cleaved by HIV-1 protease when incorporated into HIV-1 particles in a nucleocapsid-dependent-manner. Cleavage by HIV-1 protease probably ensures optimal infectivity of the mature virion.

It is found in the cytoplasm. The protein localises to the cytosol. Its subcellular location is the P-body. It localises to the stress granule. Specifically recognizes and binds N6-methyladenosine (m6A)-containing RNAs, and regulates their stability. M6A is a modification present at internal sites of mRNAs and some non-coding RNAs and plays a role in mRNA stability and processing. Acts as a regulator of mRNA stability by promoting degradation of m6A-containing mRNAs via interaction with the CCR4-NOT complex or PAN3. The YTHDF paralogs (YTHDF1, YTHDF2 and YTHDF3) share m6A-containing mRNAs targets and act redundantly to mediate mRNA degradation and cellular differentiation. Acts as a negative regulator of type I interferon response by down-regulating interferon-stimulated genes (ISGs) expression: acts by binding to FOXO3 mRNAs. Binds to FOXO3 mRNAs independently of METTL3-mediated m6A modification. Can also act as a regulator of mRNA stability in cooperation with YTHDF2 by binding to m6A-containing mRNA and promoting their degradation. Recognizes and binds m6A-containing circular RNAs (circRNAs); circRNAs are generated through back-splicing of pre-mRNAs, a non-canonical splicing process promoted by dsRNA structures across circularizing exons. Promotes formation of phase-separated membraneless compartments, such as P-bodies or stress granules, by undergoing liquid-liquid phase separation upon binding to mRNAs containing multiple m6A-modified residues: polymethylated mRNAs act as a multivalent scaffold for the binding of YTHDF proteins, juxtaposing their disordered regions and thereby leading to phase separation. The resulting mRNA-YTHDF complexes then partition into different endogenous phase-separated membraneless compartments, such as P-bodies, stress granules or neuronal RNA granules. May also recognize and bind N1-methyladenosine (m1A)-containing mRNAs: inhibits trophoblast invasion by binding to m1A-methylated transcripts of IGF1R, promoting their degradation. In terms of biological role, has some antiviral activity against HIV-1 virus: incorporated into HIV-1 particles in a nucleocapsid-dependent manner and reduces viral infectivity in the next cycle of infection. May interfere with this early step of the viral life cycle by binding to N6-methyladenosine (m6A) modified sites on the HIV-1 RNA genome. The polypeptide is YTH domain-containing family protein 3 (Homo sapiens (Human)).